Here is a 615-residue protein sequence, read N- to C-terminus: Elongation factor 4 (615 aa).

Residues 14–200 form the tr-type G domain; it reads QQIRNFCIIA…KVAELIPAPT (187 aa). Residues 26–31 and 147–150 contribute to the GTP site; these read DHGKST and NKID.

Belongs to the TRAFAC class translation factor GTPase superfamily. Classic translation factor GTPase family. LepA subfamily.

Its subcellular location is the cell membrane. It carries out the reaction GTP + H2O = GDP + phosphate + H(+). Its function is as follows. Required for accurate and efficient protein synthesis under certain stress conditions. May act as a fidelity factor of the translation reaction, by catalyzing a one-codon backward translocation of tRNAs on improperly translocated ribosomes. Back-translocation proceeds from a post-translocation (POST) complex to a pre-translocation (PRE) complex, thus giving elongation factor G a second chance to translocate the tRNAs correctly. Binds to ribosomes in a GTP-dependent manner. The sequence is that of Elongation factor 4 from Corynebacterium diphtheriae (strain ATCC 700971 / NCTC 13129 / Biotype gravis).